We begin with the raw amino-acid sequence, 508 residues long: Steroid 17-alpha-hydroxylase/17,20 lyase (508 aa).

Asparagine 202 contacts substrate. Heme is bound at residue cysteine 442.

The protein belongs to the cytochrome P450 family. Requires heme as cofactor.

It is found in the endoplasmic reticulum membrane. Its subcellular location is the microsome membrane. It carries out the reaction a C21-steroid + reduced [NADPH--hemoprotein reductase] + O2 = a 17alpha-hydroxy-C21-steroid + oxidized [NADPH--hemoprotein reductase] + H2O + H(+). It catalyses the reaction progesterone + reduced [NADPH--hemoprotein reductase] + O2 = 17alpha-hydroxyprogesterone + oxidized [NADPH--hemoprotein reductase] + H2O + H(+). The enzyme catalyses pregnenolone + reduced [NADPH--hemoprotein reductase] + O2 = 17alpha-hydroxypregnenolone + oxidized [NADPH--hemoprotein reductase] + H2O + H(+). The catalysed reaction is 17alpha-hydroxyprogesterone + reduced [NADPH--hemoprotein reductase] + O2 = androst-4-ene-3,17-dione + acetate + oxidized [NADPH--hemoprotein reductase] + H2O + 2 H(+). It carries out the reaction 17alpha-hydroxyprogesterone + reduced [NADPH--hemoprotein reductase] + O2 = 16alpha,17alpha-dihydroxyprogesterone + oxidized [NADPH--hemoprotein reductase] + H2O + H(+). It catalyses the reaction 16alpha,17alpha-dihydroxyprogesterone + reduced [NADPH--hemoprotein reductase] + O2 = 6beta,16alpha,17alpha-trihydroxyprogesterone + oxidized [NADPH--hemoprotein reductase] + H2O + H(+). The enzyme catalyses 17alpha-hydroxypregnenolone + reduced [NADPH--hemoprotein reductase] + O2 = 3beta-hydroxyandrost-5-en-17-one + acetate + oxidized [NADPH--hemoprotein reductase] + H2O + 2 H(+). The catalysed reaction is 16alpha,17alpha-dihydroxypregnenolone + reduced [NADPH--hemoprotein reductase] + O2 = 3beta,16alpha-dihydroxy-androst-5-en-17-one + acetate + oxidized [NADPH--hemoprotein reductase] + H2O + 2 H(+). It carries out the reaction 3beta-hydroxyandrost-5-en-17-one + reduced [NADPH--hemoprotein reductase] + O2 = 3beta,16alpha-dihydroxy-androst-5-en-17-one + oxidized [NADPH--hemoprotein reductase] + H2O + H(+). It catalyses the reaction androst-4-ene-3,17-dione + reduced [NADPH--hemoprotein reductase] + O2 = 16alpha-hydroxyandrost-4-ene-3,17-dione + oxidized [NADPH--hemoprotein reductase] + H2O + H(+). It participates in steroid hormone biosynthesis. The protein operates within steroid biosynthesis; glucocorticoid biosynthesis. Regulated predominantly by intracellular cAMP levels. The 17,20-lyase activity is stimulated by cytochrome b5, which acts as an allosteric effector increasing the Vmax of the lyase activity. A cytochrome P450 monooxygenase involved in corticoid and androgen biosynthesis. Catalyzes 17-alpha hydroxylation of C21 steroids, which is common for both pathways. A second oxidative step, required only for androgen synthesis, involves an acyl-carbon cleavage. The 17-alpha hydroxy intermediates, as part of adrenal glucocorticoids biosynthesis pathway, are precursors of cortisol. Hydroxylates steroid hormones, pregnenolone and progesterone to form 17-alpha hydroxy metabolites, followed by the cleavage of the C17-C20 bond to form C19 steroids, dehydroepiandrosterone (DHEA) and androstenedione. Has 16-alpha hydroxylase activity. Catalyzes 16-alpha hydroxylation of 17-alpha hydroxy pregnenolone, followed by the cleavage of the C17-C20 bond to form 16-alpha-hydroxy DHEA. Also 16-alpha hydroxylates androgens, relevant for estriol synthesis. Mechanistically, uses molecular oxygen inserting one oxygen atom into a substrate, and reducing the second into a water molecule, with two electrons provided by NADPH via cytochrome P450 reductase (CPR; NADPH-ferrihemoprotein reductase). This is Steroid 17-alpha-hydroxylase/17,20 lyase (CYP17A1) from Felis catus (Cat).